Reading from the N-terminus, the 381-residue chain is Lipid-A-disaccharide synthase (381 aa).

This sequence belongs to the LpxB family.

The enzyme catalyses a lipid X + a UDP-2-N,3-O-bis[(3R)-3-hydroxyacyl]-alpha-D-glucosamine = a lipid A disaccharide + UDP + H(+). Its pathway is bacterial outer membrane biogenesis; LPS lipid A biosynthesis. In terms of biological role, condensation of UDP-2,3-diacylglucosamine and 2,3-diacylglucosamine-1-phosphate to form lipid A disaccharide, a precursor of lipid A, a phosphorylated glycolipid that anchors the lipopolysaccharide to the outer membrane of the cell. The protein is Lipid-A-disaccharide synthase of Rickettsia bellii (strain OSU 85-389).